A 205-amino-acid polypeptide reads, in one-letter code: MNEQLINRTMAFAGILQAIAQVQHLARHGELDNAELAASLNTILVTNPDNTADVYPDKIVLQKGYKLILNQLGDSSQKDVEITRYLVGVLALERKLVRSNSGLGMLAERINQVNRQLHHFAITDEQVVANLASIYSDIISNLGPKIQISGNPVCLQRPIVQHKIRALLLAAIRSAVLWRQLGGKRRHLVFARKAIVDTAKKSLTL.

It belongs to the HflD family.

It is found in the cytoplasm. It localises to the cell inner membrane. The chain is High frequency lysogenization protein HflD homolog from Shewanella sp. (strain W3-18-1).